A 135-amino-acid polypeptide reads, in one-letter code: Ig heavy chain V region XIG14 (135 aa).

An N-terminal signal peptide occupies residues aspartate 1–serine 18. Residues threonine 20–glycine 128 enclose the Ig-like domain.

This is Ig heavy chain V region XIG14 from Xenopus laevis (African clawed frog).